Reading from the N-terminus, the 145-residue chain is 3-hydroxyacyl-[acyl-carrier-protein] dehydratase FabZ (145 aa).

His52 is an active-site residue.

It belongs to the thioester dehydratase family. FabZ subfamily.

The protein localises to the cytoplasm. The enzyme catalyses a (3R)-hydroxyacyl-[ACP] = a (2E)-enoyl-[ACP] + H2O. Functionally, involved in unsaturated fatty acids biosynthesis. Catalyzes the dehydration of short chain beta-hydroxyacyl-ACPs and long chain saturated and unsaturated beta-hydroxyacyl-ACPs. The protein is 3-hydroxyacyl-[acyl-carrier-protein] dehydratase FabZ of Deinococcus radiodurans (strain ATCC 13939 / DSM 20539 / JCM 16871 / CCUG 27074 / LMG 4051 / NBRC 15346 / NCIMB 9279 / VKM B-1422 / R1).